Reading from the N-terminus, the 262-residue chain is MSRLSWGYREHNGPIHWKEFFPIADGDQQSPIEIKTKEVKYDSSLRPLSIKYDPSSAKIISNSGHSFNVDFDDTENKSVLRGGPLTGSYRLRQVHLHWGSADDHGSEHIVDGVSYAAELHVVHWNSDKYPSFVEAAHEPDGLAVLGVFLQIGEPNSQLQKITDTLDSIKEKGKQTRFTNFDLLSLLPPSWDYWTYPGSLTVPPLLESVTWIVLKQPINISSQQLAKFRSLLCTAEGEAAAFLVSNHRPPQPLKGRKVRASFH.

The Alpha-carbonic anhydrase domain maps to 4–261 (LSWGYREHNG…LKGRKVRASF (258 aa)). Residue H65 is the Proton donor/acceptor of the active site. Zn(2+) is bound by residues H95, H97, and H120. Position 200-201 (200-201 (TV)) interacts with substrate.

The protein belongs to the alpha-carbonic anhydrase family. Requires Zn(2+) as cofactor. In terms of tissue distribution, expressed in thymus, small intestine, spleen, prostate, ovary, colon and testis.

The catalysed reaction is hydrogencarbonate + H(+) = CO2 + H2O. Inhibited by acetazolamide. Reversible hydration of carbon dioxide. This Homo sapiens (Human) protein is Carbonic anhydrase 13 (CA13).